The chain runs to 300 residues: UDP-3-O-acyl-N-acetylglucosamine deacetylase (300 aa).

Residues His-78, His-237, and Asp-241 each coordinate Zn(2+). The Proton donor role is filled by His-264.

This sequence belongs to the LpxC family. Zn(2+) serves as cofactor.

The catalysed reaction is a UDP-3-O-[(3R)-3-hydroxyacyl]-N-acetyl-alpha-D-glucosamine + H2O = a UDP-3-O-[(3R)-3-hydroxyacyl]-alpha-D-glucosamine + acetate. It functions in the pathway glycolipid biosynthesis; lipid IV(A) biosynthesis; lipid IV(A) from (3R)-3-hydroxytetradecanoyl-[acyl-carrier-protein] and UDP-N-acetyl-alpha-D-glucosamine: step 2/6. In terms of biological role, catalyzes the hydrolysis of UDP-3-O-myristoyl-N-acetylglucosamine to form UDP-3-O-myristoylglucosamine and acetate, the committed step in lipid A biosynthesis. This is UDP-3-O-acyl-N-acetylglucosamine deacetylase from Acinetobacter baumannii (strain ATCC 17978 / DSM 105126 / CIP 53.77 / LMG 1025 / NCDC KC755 / 5377).